The primary structure comprises 1214 residues: BOS complex subunit NOMO1 (1214 aa).

The signal sequence occupies residues 1 to 23 (MRAGRCAAALLLLLLSGAGRAIG). The Extracellular portion of the chain corresponds to 24–1150 (SEDIVVGCGG…RKLPEQDIAQ (1127 aa)). 3 N-linked (GlcNAc...) asparagine glycosylation sites follow: asparagine 42, asparagine 210, and asparagine 610. A coiled-coil region spans residues 692-720 (KSAQELRREQQLAEIETRRQEREKNGKEE). The segment covering 708-726 (TRRQEREKNGKEEGEEGRA) has biased composition (basic and acidic residues). The segment at 708-733 (TRRQEREKNGKEEGEEGRARPPGQEM) is disordered. A helical transmembrane segment spans residues 1151–1167 (GSYIALPLTLLLLLAGY). Over 1168–1214 (NHDKLIPLLLQLTSRLQGVRALGQAASDSSGPEDMKRQTKKQKTRRT) the chain is Cytoplasmic. The tract at residues 1190-1214 (GQAASDSSGPEDMKRQTKKQKTRRT) is disordered. Residues serine 1196 and serine 1197 each carry the phosphoserine modification. Residues 1205–1214 (QTKKQKTRRT) show a composition bias toward basic residues.

Component of the back of Sec61 (BOS) complex, composed of NCLN/Nicalin, NOMO (NOMO1, NOMO2 or NOMO3) and TMEM147. The BOS complex is part of the multi-pass translocon (MPT) complex, composed of three subcomplexes, the GEL complex (composed of RAB5IF/OPTI and TMCO1), the BOS complex (composed of NCLN/Nicalin, NOMO and TMEM147) and the PAT complex (composed of WDR83OS/Asterix and CCDC47). The MPT complex associates with the SEC61 complex.

It localises to the endoplasmic reticulum membrane. Its function is as follows. Component of the multi-pass translocon (MPT) complex that mediates insertion of multi-pass membrane proteins into the lipid bilayer of membranes. The MPT complex takes over after the SEC61 complex: following membrane insertion of the first few transmembrane segments of proteins by the SEC61 complex, the MPT complex occludes the lateral gate of the SEC61 complex to promote insertion of subsequent transmembrane regions. This Mus musculus (Mouse) protein is BOS complex subunit NOMO1.